The chain runs to 470 residues: MVQAKAGFKAGVQDYRLTYYTPDYTPKDTDLLACFRMTPQPGVPAEEAAAAVAAESSTGTWTTVWTDNLTDLDRYKGRCYDLEAVPNEDNQYFAFIAYPLDLFEEGSVTNVLTSLVGNVFGFKALRALRLEDIRFPVALIKTFQGPPHGITVERDKLNKYGRPLLGCTIKPKLGLSAKNYGRAVYECLRGGLDFTKDDENINSQPFMRWRDRFLFVQEAIEKAQAETNEMKGHYLNVTAGTCEEMMKRAEFAKEIGTPIIMHDFFTGGFTANTTLARWCRDNGILLHIHRAMHAVVDRQKNHGIHFRVLAKCLRLSGGDHLHSGTVVGKLEGERGITMGFVDLMREDYVEEDRSRGIFFTQDYASMPGTMPVASGGIHVWHMPALVEIFGDDSCLQFGGGTLGHPWGNAPGATANRVALEACVQARNEGRNLAREGNDVIREACRWSPELAAACELWKEIKFEFEAMDTL.

Positions 118 and 168 each coordinate substrate. Lysine 170 functions as the Proton acceptor in the catalytic mechanism. Lysine 172 contributes to the substrate binding site. Residues lysine 196, aspartate 198, and glutamate 199 each contribute to the Mg(2+) site. The residue at position 196 (lysine 196) is an N6-carboxylysine. The active-site Proton acceptor is the histidine 289. Positions 290, 322, and 374 each coordinate substrate.

Belongs to the RuBisCO large chain family. Type I subfamily. In terms of assembly, heterohexadecamer of 8 large chains and 8 small chains; disulfide-linked. The disulfide link is formed within the large subunit homodimers. RuBisCO interacts with the C-terminus of CcmM, and can be found in complexes that also include carbonic anhydrase (ccaA). RuBisCO associates with both the internal and shell portion of carboxysomes. Mg(2+) is required as a cofactor. Post-translationally, the disulfide bond which can form in the large chain dimeric partners within the hexadecamer appears to be associated with oxidative stress and protein turnover.

Its subcellular location is the carboxysome. It catalyses the reaction 2 (2R)-3-phosphoglycerate + 2 H(+) = D-ribulose 1,5-bisphosphate + CO2 + H2O. It carries out the reaction D-ribulose 1,5-bisphosphate + O2 = 2-phosphoglycolate + (2R)-3-phosphoglycerate + 2 H(+). Functionally, ruBisCO catalyzes two reactions: the carboxylation of D-ribulose 1,5-bisphosphate, the primary event in carbon dioxide fixation, as well as the oxidative fragmentation of the pentose substrate in the photorespiration process. Both reactions occur simultaneously and in competition at the same active site. The protein is Ribulose bisphosphate carboxylase large chain of Synechocystis sp. (strain ATCC 27184 / PCC 6803 / Kazusa).